The sequence spans 759 residues: MKRALFVAEKNDVAKGVAAILSNGTANRREGRSKFNKIYTLNTELFGQQTAISVTSVSGHMMNFQFHENMSNWQTASMVELFRAPVRHVVTPEMKLIEQTLREQAQRHDILVVWTDCDREGEAIGAEIVKVCRDSNRRLDIFRARFSEITKAAITRAARNLIRLDEKTVAAVDCRSELDLRIGSAFTRLQTLHLRNRFRDLLGQNDTSQVISYGSCQFPTLGFVTDRYKMIENFVSEPFWKLIVEHTRESHKVEFLWDRNRLFDRDTVDILHDECKETKEAHVEKVAKKPKSKWRPQALDTVELEKLGISKLRMSAKQTMQVAEKLYSKGFISYPRTETNKFPAGLNLTPLVQQQTQSNIWGDFANEVLQNGVNPRNGRKSDEAHPPIHPLKFTEKHQLQGDDWKVYELVVRHFLACVSQDAQGEETMVNLTVGTEKFHASGLRIRDMGYLKVYVYEKWGNRLLPTYTEGERFTDFELKIGDGKTQAPDFLTEADLISLMDKYGIGTDATHAEHIEKIKTREYIGVRPDGKLIPSFLGLALVDGYDDMGFAMSKPDLRANLEIGLKEICDGRRQKQEVLDEQIGKYRAIFVESERKIGVLSQSLQRYLDKNNQAGGGPGGPGGGGGPPRGPGGGGGGGPTGPPAPPKPPAKPRGRPPRKSISPAVKNGHDDPENDTIVTLSEVFGSMSNPKPARKPRAPRKSAAPKEQEEEEEVFCQCPEPMRAVTKVVQKEGPNKGKKFYTCSLPYTSSEKCNFFKWA.

Residues 3–147 (RALFVAEKND…RLDIFRARFS (145 aa)) form the Toprim domain. Residues 165-590 (DEKTVAAVDC…EQIGKYRAIF (426 aa)) enclose the Topo IA-type catalytic domain. Catalysis depends on Y334, which acts as the O-(5'-phospho-DNA)-tyrosine intermediate. The tract at residues 609–715 (DKNNQAGGGP…KEQEEEEEVF (107 aa)) is disordered. Positions 614 to 639 (AGGGPGGPGGGGGPPRGPGGGGGGGP) are enriched in gly residues. A compositionally biased stretch (pro residues) spans 640–649 (TGPPAPPKPP). Zn(2+) is bound by residues C716, C718, C743, and C753. The GRF-type zinc finger occupies 716–759 (CQCPEPMRAVTKVVQKEGPNKGKKFYTCSLPYTSSEKCNFFKWA).

This sequence belongs to the type IA topoisomerase family. As to quaternary structure, component of the BTR double Holliday Junction dissolution complex composed of at least him-6, top-3, rmh-1 and rmif-2, which is involved in double strand break repair in the germline. May interact with rmh-1.

The protein resides in the nucleus. It carries out the reaction ATP-independent breakage of single-stranded DNA, followed by passage and rejoining.. Component of the BTR double Holliday Junction dissolution complex, which is involved in homologous recombination during meiotic double strand break in the germline. Releases the supercoiling and torsional tension of DNA introduced during the DNA replication and transcription by transiently cleaving and rejoining one strand of the DNA duplex. Introduces a single-strand break via transesterification at a target site in duplex DNA. The scissile phosphodiester is attacked by the catalytic tyrosine of the enzyme, resulting in the formation of a DNA-(5'-phosphotyrosyl)-enzyme intermediate and the expulsion of a 3'-OH DNA strand. The free DNA strand than undergoes passage around the unbroken strand thus removing DNA supercoils. Finally, in the religation step, the DNA 3'-OH attacks the covalent intermediate to expel the active-site tyrosine and restore the DNA phosphodiester backbone. The chain is DNA topoisomerase 3 from Caenorhabditis elegans.